A 371-amino-acid chain; its full sequence is MNRSSYSSQSDNRYSRNPAVLCSFYSKIGACRHGEKCSKKHLKPISSRTILLANLYQNPTLNDDDYGHANGIGSETSQIIDNESVIKNSDTVGTVSQIDDSPHSNSGEVTKDETVETQEVETENSENIAETGDVKIDHNEDQKQIEDVKESDKVESSEEVQQDDKLHKEDTLEKESEDNIKQDENIEDAKLEDTEKDKLPEFTISQSQKDFDQFFQDIFVHISKLGQIRDIAVCENENNHLAGNVYVMFESAEDAYNANLQLNQEWYNGKPVYSDLSPVNDFNDACCEEYRDYHDCQRGAMCNYMHVRLPSSDIEESLYESQAKSYMLKQLEELKKELPGDIRSSSSTNDDETNGNENGISSTMAVLEQLS.

A C3H1-type 1 zinc finger spans residues 16-44; it reads RNPAVLCSFYSKIGACRHGEKCSKKHLKP. Over residues 94 to 107 the composition is skewed to polar residues; it reads TVSQIDDSPHSNSG. Residues 94 to 194 are disordered; it reads TVSQIDDSPH…NIEDAKLEDT (101 aa). Residues 115–124 show a composition bias toward acidic residues; sequence VETQEVETEN. Residues 132–194 are compositionally biased toward basic and acidic residues; sequence GDVKIDHNED…NIEDAKLEDT (63 aa). Residues 192-279 enclose the RRM domain; sequence EDTEKDKLPE…KPVYSDLSPV (88 aa). Residues 281 to 309 form a C3H1-type 2 zinc finger; the sequence is DFNDACCEEYRDYHDCQRGAMCNYMHVRL. Positions 337 to 371 are disordered; that stretch reads ELPGDIRSSSSTNDDETNGNENGISSTMAVLEQLS. The span at 355-371 shows a compositional bias: polar residues; the sequence is GNENGISSTMAVLEQLS.

The protein resides in the nucleus. Its function is as follows. Transcription factor required for yeast cell adherence to silicone substrate. This chain is Transcriptional regulator of yeast form adherence 2 (TRY2), found in Candida albicans (strain SC5314 / ATCC MYA-2876) (Yeast).